The chain runs to 232 residues: tRNA-uridine aminocarboxypropyltransferase (232 aa).

Residues Cys-31, Cys-34, Cys-41, and Cys-43 each coordinate Zn(2+). The short motif at 137–140 (DGTW) is the DXTW element.

This sequence belongs to the TDD superfamily. DTWD2 family. TapT subfamily. In terms of assembly, monomer in solution.

The enzyme catalyses a uridine in tRNA + S-adenosyl-L-methionine = a 3-[(3S)-3-amino-3-carboxypropyl]uridine in tRNA + S-methyl-5'-thioadenosine + H(+). It carries out the reaction uridine(47) in tRNA(Phe) + S-adenosyl-L-methionine = 3-[(3S)-3-amino-3-carboxypropyl]uridine(47) in tRNA(Phe) + S-methyl-5'-thioadenosine + H(+). With respect to regulation, the degree of the acp3U modification at U47 is dependent on the presence of the m7G modification at the preceding nucleotide G46. It also depends on medium conditions. Catalyzes the formation of 3-(3-amino-3-carboxypropyl)uridine (acp3U) at position 47 of tRNAs. Acp3U47 confers thermal stability on tRNA. In Escherichia coli (strain K12), this protein is tRNA-uridine aminocarboxypropyltransferase.